Reading from the N-terminus, the 206-residue chain is Guanylate kinase (206 aa).

A Guanylate kinase-like domain is found at 5–183 (FNLLILSGPS…SKEIILSIAK (179 aa)). Position 12–19 (12–19 (GPSGAGKS)) interacts with ATP.

This sequence belongs to the guanylate kinase family.

Its subcellular location is the cytoplasm. The catalysed reaction is GMP + ATP = GDP + ADP. In terms of biological role, essential for recycling GMP and indirectly, cGMP. The protein is Guanylate kinase of Helicobacter pylori (strain HPAG1).